We begin with the raw amino-acid sequence, 129 residues long: Membrane protein 0 (129 aa).

Residues 1-25 (MATVHYSRRPGTPPVTLTSSPSMDD) form a disordered region. A PPXY motif motif is present at residues 44-47 (PPPY). The helical transmembrane segment at 100 to 120 (FLILFGILTLTAVVVAIVAVF) threads the bilayer.

This sequence belongs to the varicellovirus ORF0 protein family. In terms of assembly, interacts with host ITCH; this interaction probably mediates ITCH degradation.

It localises to the host Golgi apparatus membrane. The polypeptide is Membrane protein 0 (Homo sapiens (Human)).